The sequence spans 1246 residues: Myosin-1 (1246 aa).

The segment at 1-41 (MGHSRRPVGGEKKSRGFGRSKAVADVGDGRQTGGKPQVKKA) is disordered. Positions 51-730 (IGVSDLTLLS…TLFALEAMRD (680 aa)) constitute a Myosin motor domain. Position 144-151 (144-151 (GESGAGKT)) interacts with ATP. Ser372 bears the Phosphoserine mark. Residues 419-501 (SIGILDIYGF…PGVFAALNDA (83 aa)) form an actin-binding region. 2 consecutive IQ domains span residues 734–754 (HNMAIRIQRAWRNYLRYRIEC) and 755–780 (AIRIQRFWRRMTGGLELIKVRDQGHK). The TH1 domain occupies 788-976 (RRRMSLLGSR…TIHTSAGEPP (189 aa)). Polar residues predominate over residues 956-970 (GSSNVDTYKSSTIHT). Disordered regions lie at residues 956–1080 (GSSN…PKKP) and 1127–1246 (WTPQ…DDEW). Pro residues-rich tracts occupy residues 1033–1045 (APQPAAVPRPVPQ) and 1065–1078 (APPPPPPVSPPAPK). In terms of domain architecture, SH3 spans 1077–1138 (PKKPMAKVLY…PQAYLEEQKA (62 aa)). Composition is skewed to low complexity over residues 1151 to 1166 (TPATNGTATAAAAKAK) and 1214 to 1228 (NSASNASLAGGLAEA). Basic and acidic residues predominate over residues 1229–1240 (LRQRQEAMHGKQ).

The protein belongs to the TRAFAC class myosin-kinesin ATPase superfamily. Myosin family. Phosphorylation of the TEDS site (Ser-372) is required for the polarization of the actin cytoskeleton. Phosphorylation probably activates the myosin-I ATPase activity.

Its subcellular location is the cytoplasm. It localises to the cytoskeleton. The protein localises to the actin patch. Functionally, type-I myosin implicated in the organization of the actin cytoskeleton. Required for proper actin cytoskeleton polarization. At the cell cortex, assembles in patch-like structures together with proteins from the actin-polymerizing machinery and promotes actin assembly. Functions as actin nucleation-promoting factor (NPF) for the Arp2/3 complex. Plays an important role in polarized growth, spore germination, hyphal morphogenesis, and septal wall formation. The chain is Myosin-1 (myoA) from Aspergillus terreus (strain NIH 2624 / FGSC A1156).